Consider the following 413-residue polypeptide: Inactive serine protease 35 (413 aa).

The N-terminal stretch at 1-16 is a signal peptide; the sequence is MENMLLWLIFFTPGWT. N-linked (GlcNAc...) asparagine glycosylation occurs at Asn-90. A Peptidase S1 domain is found at 124 to 408; it reads VYGTDSRFSI…ICLWIHGNDA (285 aa). The cysteines at positions 154 and 170 are disulfide-linked. Basic residues predominate over residues 191-207; it reads MRNKSGGKKRRGSKRSR. The tract at residues 191 to 250 is disordered; the sequence is MRNKSGGKKRRGSKRSRREASGGDQREGTREHLRERAKGGRRRKKSGRGQRIAEGRPSFQ. The segment covering 208–228 has biased composition (basic and acidic residues); sequence REASGGDQREGTREHLRERAK. Basic residues predominate over residues 229–238; sequence GGRRRKKSGR.

The protein belongs to the peptidase S1 family.

It is found in the secreted. This chain is Inactive serine protease 35 (PRSS35), found in Homo sapiens (Human).